The following is a 238-amino-acid chain: tRNA1(Val) (adenine(37)-N6)-methyltransferase (238 aa).

The protein belongs to the methyltransferase superfamily. tRNA (adenine-N(6)-)-methyltransferase family.

Its subcellular location is the cytoplasm. The enzyme catalyses adenosine(37) in tRNA1(Val) + S-adenosyl-L-methionine = N(6)-methyladenosine(37) in tRNA1(Val) + S-adenosyl-L-homocysteine + H(+). In terms of biological role, specifically methylates the adenine in position 37 of tRNA(1)(Val) (anticodon cmo5UAC). This Cytophaga hutchinsonii (strain ATCC 33406 / DSM 1761 / CIP 103989 / NBRC 15051 / NCIMB 9469 / D465) protein is tRNA1(Val) (adenine(37)-N6)-methyltransferase.